A 31-amino-acid polypeptide reads, in one-letter code: MPTIVSYFGFLLTASTITPALFIGLSKIRLI.

The chain crosses the membrane as a helical span at residues 4-26 (IVSYFGFLLTASTITPALFIGLS).

This sequence belongs to the PetL family. The 4 large subunits of the cytochrome b6-f complex are cytochrome b6, subunit IV (17 kDa polypeptide, PetD), cytochrome f and the Rieske protein, while the 4 small subunits are PetG, PetL, PetM and PetN. The complex functions as a dimer.

The protein resides in the plastid. The protein localises to the chloroplast thylakoid membrane. Its function is as follows. Component of the cytochrome b6-f complex, which mediates electron transfer between photosystem II (PSII) and photosystem I (PSI), cyclic electron flow around PSI, and state transitions. PetL is important for photoautotrophic growth as well as for electron transfer efficiency and stability of the cytochrome b6-f complex. This Nymphaea alba (White water-lily) protein is Cytochrome b6-f complex subunit 6.